A 263-amino-acid polypeptide reads, in one-letter code: uncharacterized protein (263 aa).

31–38 (GPTGSGKT) lines the ATP pocket.

This sequence belongs to the CbbQ/NirQ/NorQ/GpvN family.

This is an uncharacterized protein from Staphylococcus saprophyticus subsp. saprophyticus (strain ATCC 15305 / DSM 20229 / NCIMB 8711 / NCTC 7292 / S-41).